The following is a 633-amino-acid chain: Probable extracellular metalloproteinase 3 (633 aa).

An N-terminal signal peptide occupies residues 1 to 18; sequence MHGLLLAGLLALPMNVLA. A propeptide spanning residues 19–246 is cleaved from the precursor; that stretch reads HPAEQHASNV…VHNVVDYVAS (228 aa). Residue Asn410 is glycosylated (N-linked (GlcNAc...) asparagine). Zn(2+) is bound at residue His429. The active site involves Glu430. His433 contacts Zn(2+). N-linked (GlcNAc...) asparagine glycosylation is found at Asn480 and Asn622.

The protein belongs to the peptidase M36 family. The cofactor is Zn(2+).

It localises to the secreted. In terms of biological role, secreted metalloproteinase probably acting as a virulence factor. In Trichophyton verrucosum (strain HKI 0517), this protein is Probable extracellular metalloproteinase 3 (MEP3).